We begin with the raw amino-acid sequence, 210 residues long: Mitochondrial cardiolipin hydrolase (210 aa).

The Mitochondrial intermembrane portion of the chain corresponds to 1-6 (MLLWGR). The chain crosses the membrane as a helical span at residues 7–24 (WKVVAGLAGLALSLELLL). At 25–210 (RYMRRRKPIR…YDFFPEKENK (186 aa)) the chain is on the cytoplasmic side. The PLD phosphodiesterase domain occupies 138 to 165 (SSGYMHHKFAVVDGTVVLTGSLNWTVQA). Catalysis depends on residues H143, K145, and D150.

It belongs to the phospholipase D family. MitoPLD/Zucchini subfamily. Homodimer.

The protein resides in the mitochondrion outer membrane. It catalyses the reaction a cardiolipin + H2O = a 1,2-diacyl-sn-glycero-3-phospho-(1'-sn-glycerol) + a 1,2-diacyl-sn-glycero-3-phosphate + H(+). Its function is as follows. Presents phospholipase and nuclease activities, depending on the different physiological conditions. Plays a key role in mitochondrial fusion and fission via its phospholipase activity. In its phospholipase role, it uses the mitochondrial lipid cardiolipin as substrate to generate phosphatidate (PA or 1,2-diacyl-sn-glycero-3-phosphate), a second messenger signaling lipid. Production of PA facilitates Mitofusin-mediated fusion, whereas the cleavage of PA by the Lipin family of phosphatases produces diacylgycerol (DAG) which promotes mitochondrial fission. Regulates mitochondrial shape through facilitating mitochondrial fusion. During spermatogenesis, plays a critical role in PIWI-interacting RNA (piRNA) biogenesis. piRNAs provide essential protection against the activity of mobile genetic elements. piRNA-mediated transposon silencing is thus critical for maintaining genome stability, in particular in germline cells when transposons are mobilized as a consequence of wide-spread genomic demethylation. Has been shown to be a backbone-non-specific, single strand-specific nuclease, cleaving either RNA or DNA substrates with similar affinity. Produces 5' phosphate and 3' hydroxyl termini, suggesting it could directly participate in the processing of primary piRNA transcripts. Has been proposed to act as a cardiolipin hydrolase to generate phosphatidic acid at mitochondrial surface. Although it cannot be excluded that it can act as a phospholipase in some circumstances, this activity could not be confirmed. This chain is Mitochondrial cardiolipin hydrolase (pld6), found in Xenopus tropicalis (Western clawed frog).